Here is a 299-residue protein sequence, read N- to C-terminus: Leucine zipper transcription factor-like protein 1 (299 aa).

Residues 96 to 299 (LKLQTDISEL…KRLAKYESED (204 aa)) are a coiled coil. Positions 145-299 (GTTELLNKEI…KRLAKYESED (155 aa)) are interaction with BSS9.

This sequence belongs to the LZTFL1 family. Self-associates. Interacts with BBS9; the interaction mediates the association of LZTL1 with the BBsome complex and regulates BBSome ciliary trafficking. In terms of tissue distribution, highly expressed in testis. Expressed in brain, cerebellum, eye, heart, kidney, liver, lung and trachea. In small intestine, graded expression along the crypt-villus axis with high levels in the villus apex and lower levels in the crypt stem cells (at protein level). Not expressed in skeletal muscle and white adipose tissue.

The protein resides in the cytoplasm. Its function is as follows. Regulates ciliary localization of the BBSome complex. Together with the BBSome complex, controls SMO ciliary trafficking and contributes to the sonic hedgehog (SHH) pathway regulation. May play a role in neurite outgrowth. May have tumor suppressor function. The chain is Leucine zipper transcription factor-like protein 1 (Lztfl1) from Mus musculus (Mouse).